The primary structure comprises 445 residues: Ubiquitin carboxyl-terminal hydrolase MINDY-3 (445 aa).

Cys-51 acts as the Nucleophile in catalysis. The residue at position 125 (Ser-125) is a Phosphoserine. The active-site Proton acceptor is the His-287.

The protein belongs to the MINDY deubiquitinase family. FAM188 subfamily. Interacts with COPS5. Widely expressed with high levels in heart, skeletal muscle, and kidney, and low levels in liver and brain. Also expressed in lung (at protein level).

Its subcellular location is the nucleus. The catalysed reaction is Thiol-dependent hydrolysis of ester, thioester, amide, peptide and isopeptide bonds formed by the C-terminal Gly of ubiquitin (a 76-residue protein attached to proteins as an intracellular targeting signal).. Its function is as follows. Hydrolase that can remove 'Lys-48'-linked conjugated ubiquitin from proteins. This chain is Ubiquitin carboxyl-terminal hydrolase MINDY-3, found in Homo sapiens (Human).